A 218-amino-acid polypeptide reads, in one-letter code: Large ribosomal subunit protein uL4 (218 aa).

The tract at residues 46-102 (ARQGTHSTKTRGEVRGGGRKPFRQKGTGRARQGSIRAPHFTGGGISHGPKPRDYSQR) is disordered. Basic residues predominate over residues 62–73 (GGRKPFRQKGTG).

Belongs to the universal ribosomal protein uL4 family. Part of the 50S ribosomal subunit.

Its function is as follows. One of the primary rRNA binding proteins, this protein initially binds near the 5'-end of the 23S rRNA. It is important during the early stages of 50S assembly. It makes multiple contacts with different domains of the 23S rRNA in the assembled 50S subunit and ribosome. In terms of biological role, forms part of the polypeptide exit tunnel. In Corynebacterium glutamicum (strain R), this protein is Large ribosomal subunit protein uL4.